We begin with the raw amino-acid sequence, 121 residues long: MIQQETFLTVADNSGAKKLQCIRVLGSNRRYAHVGDVIVAAVKDALPNMGVKKSDVVKAVVVRTKATLRRETGNSIRFDDNAAVLINEDKNPRGTRVFGPVARELRERNFTKIVSLAPEVI.

This sequence belongs to the universal ribosomal protein uL14 family. In terms of assembly, part of the 50S ribosomal subunit. Forms a cluster with proteins L3 and L19. In the 70S ribosome, L14 and L19 interact and together make contacts with the 16S rRNA in bridges B5 and B8.

Functionally, binds to 23S rRNA. Forms part of two intersubunit bridges in the 70S ribosome. This chain is Large ribosomal subunit protein uL14, found in Prochlorococcus marinus (strain MIT 9211).